A 911-amino-acid chain; its full sequence is Bifunctional aspartokinase/homoserine dehydrogenase 1, chloroplastic (911 aa).

The transit peptide at 1 to 82 directs the protein to the chloroplast; sequence MPVVSLAKVV…VENGHLPKGD (82 aa). Residues 83–331 are aspartokinase; it reads SWAVHKFGGT…VSEAVVLKTL (249 aa). Residues 332-557 form an interface region; sequence SYQEAWEMSY…LSRTTLAVGI (226 aa). 2 ACT domains span residues 407 to 482 and 488 to 565; these read VEGT…IIPN and AVGQ…LIGG. The tract at residues 558–911 is homoserine dehydrogenase; sequence IGPGLIGGTL…RLAFYLGAPS (354 aa). Residues I563 and T644 each contribute to the NAD(+) site. I563, T644, and K668 together coordinate NADP(+). NADPH is bound by residues I563, T644, and K668. Residues E695, V698, A700, and L702 each contribute to the Na(+) site. The NADP(+) site is built by G753 and E756. Positions 756 and 767 each coordinate L-homoserine. K771 acts as the Proton donor in catalysis. G888 lines the NAD(+) pocket. Residue G888 participates in NADP(+) binding. G888 provides a ligand contact to NADPH.

The protein in the N-terminal section; belongs to the aspartokinase family. This sequence in the C-terminal section; belongs to the homoserine dehydrogenase family. In terms of assembly, homo- or heterodimer. A metal cation serves as cofactor.

The protein resides in the plastid. The protein localises to the chloroplast. It carries out the reaction L-homoserine + NADP(+) = L-aspartate 4-semialdehyde + NADPH + H(+). The enzyme catalyses L-homoserine + NAD(+) = L-aspartate 4-semialdehyde + NADH + H(+). It catalyses the reaction L-aspartate + ATP = 4-phospho-L-aspartate + ADP. The protein operates within amino-acid biosynthesis; L-lysine biosynthesis via DAP pathway; (S)-tetrahydrodipicolinate from L-aspartate: step 1/4. Its pathway is amino-acid biosynthesis; L-methionine biosynthesis via de novo pathway; L-homoserine from L-aspartate: step 1/3. It participates in amino-acid biosynthesis; L-methionine biosynthesis via de novo pathway; L-homoserine from L-aspartate: step 3/3. It functions in the pathway amino-acid biosynthesis; L-threonine biosynthesis; L-threonine from L-aspartate: step 1/5. The protein operates within amino-acid biosynthesis; L-threonine biosynthesis; L-threonine from L-aspartate: step 3/5. With respect to regulation, inhibition of aspartate kinase activity by threonine and leucine and 3-fold activation by cysteine, isoleucine, valine, serine and alanine at 2.5 mM. Partial inhibition of homoserine dehydrogenase activity by threonine and cysteine (14% of activity remaining at saturation with either amino acid). No synergy between the effectors for both activation or inhibition. Functionally, bifunctional aspartate kinase and homoserine dehydrogenase that catalyzes the first and the third steps toward the synthesis of lysine, methionine and threonine from aspartate. The protein is Bifunctional aspartokinase/homoserine dehydrogenase 1, chloroplastic of Arabidopsis thaliana (Mouse-ear cress).